The sequence spans 395 residues: 8-amino-7-oxononanoate synthase (395 aa).

Residue R24 coordinates substrate. Pyridoxal 5'-phosphate is bound at residue G111–F112. H136 contributes to the substrate binding site. Pyridoxal 5'-phosphate contacts are provided by residues S184, D209–H212, and T240–K243. Residue K243 is modified to N6-(pyridoxal phosphate)lysine. T357 is a substrate binding site.

Belongs to the class-II pyridoxal-phosphate-dependent aminotransferase family. BioF subfamily. As to quaternary structure, homodimer. Requires pyridoxal 5'-phosphate as cofactor.

The catalysed reaction is 6-carboxyhexanoyl-[ACP] + L-alanine + H(+) = (8S)-8-amino-7-oxononanoate + holo-[ACP] + CO2. It functions in the pathway cofactor biosynthesis; biotin biosynthesis. Catalyzes the decarboxylative condensation of pimeloyl-[acyl-carrier protein] and L-alanine to produce 8-amino-7-oxononanoate (AON), [acyl-carrier protein], and carbon dioxide. In Thermoanaerobacter pseudethanolicus (strain ATCC 33223 / 39E) (Clostridium thermohydrosulfuricum), this protein is 8-amino-7-oxononanoate synthase.